A 495-amino-acid chain; its full sequence is Type-1 histone deacetylase 1 (495 aa).

Asp-94 serves as a coordination point for substrate. Residue His-136 is the Proton acceptor of the active site. Substrate is bound at residue Gly-144. A divalent metal cation is bound by residues Asp-171, His-173, and Asp-259. Substrate is bound at residue Tyr-298. The disordered stretch occupies residues 372-495 (PAAAHHDIPP…EDADVDMDSG (124 aa)). The span at 396-413 (DVRISEADRDKKVHHQGE) shows a compositional bias: basic and acidic residues. Polar residues predominate over residues 425–443 (NYSNGLEATSTSRRNQVSI). A compositionally biased stretch (low complexity) spans 454 to 480 (NSRNNNNNNNNNNNNNNNNNNNSNNNN).

The protein belongs to the histone deacetylase family. HD type 1 subfamily.

It is found in the nucleus. The protein resides in the cytoplasm. The enzyme catalyses N(6)-acetyl-L-lysyl-[histone] + H2O = L-lysyl-[histone] + acetate. Functionally, responsible for the deacetylation of lysine residues on the N-terminal part of the core histones (H2A, H2B, H3 and H4). Histone deacetylation plays an important role in transcriptional regulation, cell cycle progression and developmental events. Histone deacetylases act via the formation of large multiprotein complexes. The polypeptide is Type-1 histone deacetylase 1 (hdaA) (Dictyostelium discoideum (Social amoeba)).